We begin with the raw amino-acid sequence, 320 residues long: MAFAKISQVAHYAPAQVVTDDDLSKIMDTSDEWIRSRTGIQERRISLNENTSDLATNVAYQLLEKSGLSPEELDFVLVATISPDNSMPSVAARVQGTIGAVNAFAFDITAACSGFVFALATAEKLIKSGAYKKGLVIGAEVLSKTLDWSDRATAVLFGDGAGGVLLEESEEEHFFGESLNTDGSKGGLESGASAVISPYSDGTEQPNPYMQMDGKAIFDFAVKTVSKSIKALVEEKGEPDYFLLHQANIRILDTMAKKIDVSRDKFLANMMSYGNTSAASIPILLSENVANETLKLGSDQTILLSGFGGGLTWGSLIVKI.

Active-site residues include cysteine 112 and histidine 245. The interval 246-250 is ACP-binding; it reads QANIR. Asparagine 275 is an active-site residue.

Belongs to the thiolase-like superfamily. FabH family. In terms of assembly, homodimer.

It localises to the cytoplasm. It carries out the reaction malonyl-[ACP] + acetyl-CoA + H(+) = 3-oxobutanoyl-[ACP] + CO2 + CoA. The protein operates within lipid metabolism; fatty acid biosynthesis. Functionally, catalyzes the condensation reaction of fatty acid synthesis by the addition to an acyl acceptor of two carbons from malonyl-ACP. Catalyzes the first condensation reaction which initiates fatty acid synthesis and may therefore play a role in governing the total rate of fatty acid production. Possesses both acetoacetyl-ACP synthase and acetyl transacylase activities. Its substrate specificity determines the biosynthesis of branched-chain and/or straight-chain of fatty acids. The polypeptide is Beta-ketoacyl-[acyl-carrier-protein] synthase III (Streptococcus thermophilus (strain ATCC BAA-250 / LMG 18311)).